The following is a 45-amino-acid chain: Parabutoporin (45 aa).

In terms of assembly, monomer and homodimer. Expressed by the venom gland.

The protein localises to the secreted. Its subcellular location is the target cell membrane. Its function is as follows. At high concentrations, acts as a pore former in cellular membranes and causes the leakage of the cells. At submicromolar concentrations, degranulates granulocytes and has a weak hemolytic activity against human red blood cells. Also strongly inhibits the production of superoxide anions. Has a strong antibacterial activity against Gram-negative bacteria but is less active against Gram-positive bacteria. Also has antifungal activity. Induces reversible G-protein dependent Ca(2+) release from intracellular stores and increase Ca(2+) influx in HL-60 cells. Induces the activation of the Rac pathway in granulocytes. Synergistically enhances the excitatory effects of short and long chain ion-channel-specific neurotoxins by interaction with the neuronal membranes. The protein is Parabutoporin of Parabuthus schlechteri (Scorpion).